Consider the following 375-residue polypeptide: Sulfite efflux pump SSU1 (375 aa).

At 1 to 25 (MPSGSGFHNIEEAGEKARKRDDWIA) the chain is on the cytoplasmic side. The helical transmembrane segment at 26–46 (ISNFHPGWFSVNMGTGITAIL) threads the bilayer. The Extracellular segment spans residues 47 to 59 (LQNLPYQFPGLHY). Residues 60–80 (IAVVLFILNVIIFFLFLTISI) form a helical membrane-spanning segment. Residues 81–101 (TRYCLWPDKFKAMLAHPAHSM) lie on the Cytoplasmic side of the membrane. The helical transmembrane segment at 102 to 122 (LLGTFPMGFATIINCIVFICV) threads the bilayer. The Extracellular portion of the chain corresponds to 123 to 135 (PVWGEWASRFAWG). A helical membrane pass occupies residues 136–156 (LWWIDAAVSVAICYFVPFMLM). The Cytoplasmic portion of the chain corresponds to 157–167 (TKHTSSLETMT). The chain crosses the membrane as a helical span at residues 168 to 188 (AAWLLPIVAPVVAAASGGVVA). Topologically, residues 189-200 (DSLQNDTHALIT) are extracellular. N193 carries N-linked (GlcNAc...) asparagine glycosylation. Residues 201-221 (ILVCYAMWGSAVPLAMVILVI) traverse the membrane as a helical segment. The Cytoplasmic segment spans residues 222-234 (YFQRLAIHKLVPR). A helical membrane pass occupies residues 235–255 (AAIVSALLPIGPLGQGGFGLM). At 256–277 (QLGVVAKRVFPRLDFLAPIAGD) the chain is on the extracellular side. A helical transmembrane segment spans residues 278–298 (IFYVMGAFIAMIMWGFGLIWL). The Cytoplasmic segment spans residues 299–309 (WFALASFTRGK). A helical membrane pass occupies residues 310 to 330 (FYFNIGWWAFTFPLGVFTTAT). The Extracellular portion of the chain corresponds to 331-343 (TQMGKEFNSPFFD). The helical transmembrane segment at 344-364 (ILGTFFSIVVTCMWVLVFALT) threads the bilayer. At 365–375 (VYKSCTKELFR) the chain is on the cytoplasmic side.

The protein belongs to the tellurite-resistance/dicarboxylate transporter (TDT) family.

The protein resides in the cell membrane. Its function is as follows. Sulphite efflux pump required for the secretion of sulphite as a reducing agent. In the presence of sulphite, cystine in keratin is directly cleaved to cysteine and S-sulphocysteine, and thereby, reduced proteins become accessible to hydrolysis by a variety of secreted endo- and exoproteases. Excretion of sulphite mediated by an efflux pump also represents a detoxification pathway for dermatophytes during infection of the epidermal stratum corneum, hair and nails, which are rich in cysteine. The sequence is that of Sulfite efflux pump SSU1 (SSU1) from Trichophyton rubrum (Athlete's foot fungus).